The sequence spans 396 residues: NADH-quinone oxidoreductase subunit D (396 aa).

Belongs to the complex I 49 kDa subunit family. As to quaternary structure, NDH-1 is composed of 14 different subunits. Subunits NuoB, C, D, E, F, and G constitute the peripheral sector of the complex.

The protein resides in the cell inner membrane. The enzyme catalyses a quinone + NADH + 5 H(+)(in) = a quinol + NAD(+) + 4 H(+)(out). Its function is as follows. NDH-1 shuttles electrons from NADH, via FMN and iron-sulfur (Fe-S) centers, to quinones in the respiratory chain. The immediate electron acceptor for the enzyme in this species is believed to be ubiquinone. Couples the redox reaction to proton translocation (for every two electrons transferred, four hydrogen ions are translocated across the cytoplasmic membrane), and thus conserves the redox energy in a proton gradient. This Brucella suis biovar 1 (strain 1330) protein is NADH-quinone oxidoreductase subunit D.